A 382-amino-acid chain; its full sequence is Non-structural maintenance of chromosomes element 4 homolog A (382 aa).

A compositionally biased stretch (basic and acidic residues) spans 1-21 (MSGDSSGRRPEGRGRGRDPHR). The disordered stretch occupies residues 1-80 (MSGDSSGRRP…ASLEEETDPS (80 aa)). Residues 31–41 (RSPLSPGSRRG) are compositionally biased toward low complexity. A compositionally biased stretch (basic and acidic residues) spans 42–55 (AAPERREAPERPGL). Residues 56-78 (EDTEPSDSGDEMIDPASLEEETD) are compositionally biased toward acidic residues. Phosphothreonine is present on T342. S374 carries the phosphoserine modification.

This sequence belongs to the NSE4 family. Component of the SMC5-SMC6 complex which consists at least of SMC5, SMC6, NSMCE2, NSMCE1, NSMCE4A or EID3 and NSMCE3. NSMCE1, NSMCE4A or EID3 and NSMCE3 probably form a subcomplex that bridges the head domains of the SMC5:SMC6 heterodimer. Interacts with NSMCE3.

It is found in the nucleus. The protein resides in the chromosome. It localises to the telomere. Functionally, component of the SMC5-SMC6 complex, a complex involved in repair of DNA double-strand breaks by homologous recombination. The complex may promote sister chromatid homologous recombination by recruiting the SMC1-SMC3 cohesin complex to double-strand breaks. The complex is required for telomere maintenance via recombination and mediates sumoylation of shelterin complex (telosome) components. This is Non-structural maintenance of chromosomes element 4 homolog A (NSMCE4A) from Bos taurus (Bovine).